Here is a 239-residue protein sequence, read N- to C-terminus: Pyridoxine 5'-phosphate synthase (239 aa).

Asn7 provides a ligand contact to 3-amino-2-oxopropyl phosphate. Asp9 to His10 is a binding site for 1-deoxy-D-xylulose 5-phosphate. A 3-amino-2-oxopropyl phosphate-binding site is contributed by Arg18. Catalysis depends on His43, which acts as the Proton acceptor. The 1-deoxy-D-xylulose 5-phosphate site is built by Arg45 and His50. The active-site Proton acceptor is the Glu70. Thr100 lines the 1-deoxy-D-xylulose 5-phosphate pocket. The active-site Proton donor is the His191. 3-amino-2-oxopropyl phosphate-binding positions include Gly192 and Gly213–His214.

The protein belongs to the PNP synthase family. As to quaternary structure, homooctamer; tetramer of dimers.

The protein localises to the cytoplasm. The enzyme catalyses 3-amino-2-oxopropyl phosphate + 1-deoxy-D-xylulose 5-phosphate = pyridoxine 5'-phosphate + phosphate + 2 H2O + H(+). It participates in cofactor biosynthesis; pyridoxine 5'-phosphate biosynthesis; pyridoxine 5'-phosphate from D-erythrose 4-phosphate: step 5/5. Functionally, catalyzes the complicated ring closure reaction between the two acyclic compounds 1-deoxy-D-xylulose-5-phosphate (DXP) and 3-amino-2-oxopropyl phosphate (1-amino-acetone-3-phosphate or AAP) to form pyridoxine 5'-phosphate (PNP) and inorganic phosphate. The protein is Pyridoxine 5'-phosphate synthase of Trichlorobacter lovleyi (strain ATCC BAA-1151 / DSM 17278 / SZ) (Geobacter lovleyi).